A 213-amino-acid polypeptide reads, in one-letter code: Probable nicotinate-nucleotide adenylyltransferase (213 aa).

This sequence belongs to the NadD family.

The enzyme catalyses nicotinate beta-D-ribonucleotide + ATP + H(+) = deamido-NAD(+) + diphosphate. The protein operates within cofactor biosynthesis; NAD(+) biosynthesis; deamido-NAD(+) from nicotinate D-ribonucleotide: step 1/1. Its function is as follows. Catalyzes the reversible adenylation of nicotinate mononucleotide (NaMN) to nicotinic acid adenine dinucleotide (NaAD). The sequence is that of Probable nicotinate-nucleotide adenylyltransferase from Pectobacterium atrosepticum (strain SCRI 1043 / ATCC BAA-672) (Erwinia carotovora subsp. atroseptica).